The chain runs to 146 residues: Large ribosomal subunit protein uL11 (146 aa).

The protein belongs to the universal ribosomal protein uL11 family. As to quaternary structure, part of the ribosomal stalk of the 50S ribosomal subunit. Interacts with L10 and the large rRNA to form the base of the stalk. L10 forms an elongated spine to which L12 dimers bind in a sequential fashion forming a multimeric L10(L12)X complex. One or more lysine residues are methylated.

Forms part of the ribosomal stalk which helps the ribosome interact with GTP-bound translation factors. The polypeptide is Large ribosomal subunit protein uL11 (Blochmanniella floridana).